Consider the following 50-residue polypeptide: Light-harvesting protein B-870 beta chain (50 aa).

Residues 2-22 (ADNTDLSFTGLTDEQAQELHS) lie on the Cytoplasmic side of the membrane. His21 and His39 together coordinate a bacteriochlorophyll. The helical transmembrane segment at 23 to 45 (VYMSGLFLFAAVAVVAHLATYIW) threads the bilayer. At 46–50 (RPWFG) the chain is on the periplasmic side.

This sequence belongs to the antenna complex beta subunit family. The core complex is formed by different alpha and beta chains, binding bacteriochlorophyll molecules, and arranged most probably in tetrameric structures disposed around the reaction center. The non-pigmented gamma chains may constitute additional components.

The protein localises to the cell inner membrane. Its function is as follows. Antenna complexes are light-harvesting systems, which transfer the excitation energy to the reaction centers. The chain is Light-harvesting protein B-870 beta chain (pufB) from Roseobacter denitrificans (strain ATCC 33942 / OCh 114) (Erythrobacter sp. (strain OCh 114)).